We begin with the raw amino-acid sequence, 549 residues long: Lipase 3 (549 aa).

The first 15 residues, 1-15 (MKLALALSLIASVAA), serve as a signal peptide directing secretion. Cysteine 75 and cysteine 112 are oxidised to a cystine. The active-site Acyl-ester intermediate is serine 224. Cysteine 283 and cysteine 292 are oxidised to a cystine. N-linked (GlcNAc...) asparagine glycosylation occurs at asparagine 329. Glutamate 356 serves as the catalytic Charge relay system. A glycan (N-linked (GlcNAc...) asparagine) is linked at asparagine 366. Histidine 464 functions as the Charge relay system in the catalytic mechanism.

It belongs to the type-B carboxylesterase/lipase family. As to quaternary structure, monomer and homodimer.

The catalysed reaction is a triacylglycerol + H2O = a diacylglycerol + a fatty acid + H(+). The chain is Lipase 3 (LIP3) from Diutina rugosa (Yeast).